Reading from the N-terminus, the 202-residue chain is Small ribosomal subunit protein uS4 (202 aa).

The segment covering 1 to 13 (MSRYRGPRLRVTR) has biased composition (basic residues). The tract at residues 1 to 42 (MSRYRGPRLRVTRRLGELPGLTRKASKKSNPPGQHGQARRKR) is disordered. One can recognise an S4 RNA-binding domain in the interval 90–152 (NRLDNVCFRL…KASKKLVEGN (63 aa)).

This sequence belongs to the universal ribosomal protein uS4 family. In terms of assembly, part of the 30S ribosomal subunit. Contacts protein S5. The interaction surface between S4 and S5 is involved in control of translational fidelity.

One of the primary rRNA binding proteins, it binds directly to 16S rRNA where it nucleates assembly of the body of the 30S subunit. Its function is as follows. With S5 and S12 plays an important role in translational accuracy. In Prochlorococcus marinus (strain AS9601), this protein is Small ribosomal subunit protein uS4.